The primary structure comprises 278 residues: MTKLHSVDFFPAQEVSVAIEPRLPQGAFPEHHHDFHEIVIVEHGTGIHVLNGQPYTISGGMVCFIRDSDRHMYEHTDNLNLTNVLYRSPDKFRFLAGLHQLLPQECNGHYPSHWRIDQHTLQQVRQLITRLEQVSAGQDLSTVANREILFMQLLVALRKNSLLEGDENTDARLNHLIAWLEDHFAEAVSWEAIADRFALSLRTLHRQLKQHTGLTPQRYLNRLRLVKARHLLRHSDDSVTHIAFSCGFADSNHFSTLFRREFGWSPREIRQGRDASLQ.

The HTH araC/xylS-type domain occupies 174-272 (NHLIAWLEDH…GWSPREIRQG (99 aa)). 2 consecutive DNA-binding regions (H-T-H motif) follow at residues 191–212 (EAIA…KQHT) and 239–262 (VTHI…RREF).

As to quaternary structure, binds DNA as a dimer.

The protein localises to the cytoplasm. Activates expression of the rhaBAD and rhaT operons. The chain is HTH-type transcriptional activator RhaS from Escherichia fergusonii (strain ATCC 35469 / DSM 13698 / CCUG 18766 / IAM 14443 / JCM 21226 / LMG 7866 / NBRC 102419 / NCTC 12128 / CDC 0568-73).